Reading from the N-terminus, the 386-residue chain is Cytotoxic granule associated RNA binding protein TIA1 (386 aa).

M1 is modified (N-acetylmethionine). 3 RRM domains span residues 7–83, 106–184, and 214–286; these read KTLY…WATT, FHVF…WATR, and CTVY…WGKE. The tract at residues 354–386 is disordered; sequence MGPNYGVQPPQGQNGSMLPNQPSGYRVAGYETQ. The span at 363 to 376 shows a compositional bias: polar residues; sequence PQGQNGSMLPNQPS.

Homooligomer; homooligomerization is induced by Zn(2+). Interacts with FASTK; the interactions leads to its phosphorylation. Interacts (via RRM1 and the C-terminal glutamine-rich (Q) sequence) with SNRPC/U1-C (via N-terminus); thereby facilitating spliceosomal U1 snRNP recruitment to 5' splice sites. In terms of processing, phosphorylated by FASTK; phosphorylation occurs after FAS ligation in FAS-mediated apoptosis and before DNA fragmentation. Expressed in heart, small intestine, kidney, liver, lung, skeletal muscle, testes, pancreas, and ovary (at protein level).

It is found in the nucleus. The protein resides in the cytoplasm. The protein localises to the stress granule. Its function is as follows. RNA-binding protein involved in the regulation of alternative pre-RNA splicing and mRNA translation by binding to uridine-rich (U-rich) RNA sequences. Binds to U-rich sequences immediately downstream from a 5' splice sites in a uridine-rich small nuclear ribonucleoprotein (U snRNP)-dependent fashion, thereby modulating alternative pre-RNA splicing. Preferably binds to the U-rich IAS1 sequence in a U1 snRNP-dependent manner; this binding is optimal if a 5' splice site is adjacent to IAS1. Activates the use of heterologous 5' splice sites; the activation depends on the intron sequence downstream from the 5' splice site, with a preference for a downstream U-rich sequence. By interacting with SNRPC/U1-C, promotes recruitment and binding of spliceosomal U1 snRNP to 5' splice sites followed by U-rich sequences, thereby facilitating atypical 5' splice site recognition by U1 snRNP. Activates splicing of alternative exons with weak 5' splice sites followed by a U-rich stretch on its own pre-mRNA and on TIAR mRNA. Acts as a modulator of alternative splicing for the apoptotic FAS receptor, thereby promoting apoptosis. Binds to the 5' splice site region of FAS intron 5 to promote accumulation of transcripts that include exon 6 at the expense of transcripts in which exon 6 is skipped, thereby leading to the transcription of a membrane-bound apoptotic FAS receptor, which promotes apoptosis. Binds to a conserved AU-rich cis element in COL2A1 intron 2 and modulates alternative splicing of COL2A1 exon 2. Also binds to the equivalent AT-rich element in COL2A1 genomic DNA, and may thereby be involved in the regulation of transcription. Binds specifically to a polypyrimidine-rich controlling element (PCE) located between the weak 5' splice site and the intronic splicing silencer of CFTR mRNA to promote exon 9 inclusion, thereby antagonizing PTB1 and its role in exon skipping of CFTR exon 9. Involved in the repression of mRNA translation by binding to AU-rich elements (AREs) located in mRNA 3' untranslated regions (3' UTRs), including target ARE-bearing mRNAs encoding TNF and PTGS2. Also participates in the cellular response to environmental stress, by acting downstream of the stress-induced phosphorylation of EIF2S1/EIF2A to promote the recruitment of untranslated mRNAs to cytoplasmic stress granules (SGs), leading to stress-induced translational arrest. Formation and recruitment to SGs is regulated by Zn(2+). Possesses nucleolytic activity against cytotoxic lymphocyte target cells. Displays enhanced splicing regulatory activity compared with TIA isoform Long. This Homo sapiens (Human) protein is Cytotoxic granule associated RNA binding protein TIA1 (TIA1).